Consider the following 1319-residue polypeptide: DNA-directed RNA polymerase subunit beta' (1319 aa).

4 residues coordinate Zn(2+): Cys-60, Cys-62, Cys-75, and Cys-78. Asp-535, Asp-537, and Asp-539 together coordinate Mg(2+). 4 residues coordinate Zn(2+): Cys-890, Cys-971, Cys-978, and Cys-981.

The protein belongs to the RNA polymerase beta' chain family. In terms of assembly, the RNAP catalytic core consists of 2 alpha, 1 beta, 1 beta' and 1 omega subunit. When a sigma factor is associated with the core the holoenzyme is formed, which can initiate transcription. Mg(2+) is required as a cofactor. Requires Zn(2+) as cofactor.

It carries out the reaction RNA(n) + a ribonucleoside 5'-triphosphate = RNA(n+1) + diphosphate. DNA-dependent RNA polymerase catalyzes the transcription of DNA into RNA using the four ribonucleoside triphosphates as substrates. This chain is DNA-directed RNA polymerase subunit beta', found in Mycobacteroides abscessus (strain ATCC 19977 / DSM 44196 / CCUG 20993 / CIP 104536 / JCM 13569 / NCTC 13031 / TMC 1543 / L948) (Mycobacterium abscessus).